Consider the following 91-residue polypeptide: MARVTVQDAVEKIGNRFDLVLVAARRARQLQVGAKDPLVPEENDKMTVIALREIEEGLINGKILDARERQEQQEQEAAELQAVSAIAEGRR.

The protein belongs to the RNA polymerase subunit omega family. As to quaternary structure, the RNAP catalytic core consists of 2 alpha, 1 beta, 1 beta' and 1 omega subunit. When a sigma factor is associated with the core the holoenzyme is formed, which can initiate transcription.

The enzyme catalyses RNA(n) + a ribonucleoside 5'-triphosphate = RNA(n+1) + diphosphate. Functionally, promotes RNA polymerase assembly. Latches the N- and C-terminal regions of the beta' subunit thereby facilitating its interaction with the beta and alpha subunits. This is DNA-directed RNA polymerase subunit omega from Proteus mirabilis (strain HI4320).